The sequence spans 275 residues: Hydroxyethylthiazole kinase (275 aa).

Methionine 53 is a substrate binding site. ATP contacts are provided by arginine 128 and serine 174. Glycine 201 contacts substrate.

Belongs to the Thz kinase family. Mg(2+) serves as cofactor.

It carries out the reaction 5-(2-hydroxyethyl)-4-methylthiazole + ATP = 4-methyl-5-(2-phosphooxyethyl)-thiazole + ADP + H(+). It functions in the pathway cofactor biosynthesis; thiamine diphosphate biosynthesis; 4-methyl-5-(2-phosphoethyl)-thiazole from 5-(2-hydroxyethyl)-4-methylthiazole: step 1/1. In terms of biological role, catalyzes the phosphorylation of the hydroxyl group of 4-methyl-5-beta-hydroxyethylthiazole (THZ). The polypeptide is Hydroxyethylthiazole kinase (Kineococcus radiotolerans (strain ATCC BAA-149 / DSM 14245 / SRS30216)).